Here is a 382-residue protein sequence, read N- to C-terminus: Gap junction alpha-1 protein (382 aa).

The Cytoplasmic portion of the chain corresponds to 2–23 (GDWSALGKLLDKVQAYSTAGGK). S5 is modified (phosphoserine). The helical transmembrane segment at 24 to 44 (VWLSVLFIFRILLLGTAVESA) threads the bilayer. Over 45–76 (WGDEQSAFRCNTQQPGCENVCYDKSFPISHVR) the chain is Extracellular. 2 disulfides stabilise this stretch: C54-C192 and C187-C198. Residues 77–97 (FWVLQIIFVSVPTLLYLAHVF) traverse the membrane as a helical segment. At 98 to 155 (YVMRKEEKLNKKEEELKVAQTDGANVDMHLKQIEIKKFKYGIEEHGKVKMRGGLLRTY) the chain is on the cytoplasmic side. Residue K144 forms a Glycyl lysine isopeptide (Lys-Gly) (interchain with G-Cter in SUMO) linkage. A helical membrane pass occupies residues 156 to 176 (IISILFKSVFEVAFLLIQWYI). Topologically, residues 177–207 (YGFSLSAVYTCKRDPCPHQVDCFLSRPTEKT) are extracellular. A helical membrane pass occupies residues 208 to 228 (IFIIFMLVVSLVSLALNIIEL). The Cytoplasmic portion of the chain corresponds to 229–382 (FYVFFKGIKD…SRPRPDDLEI (154 aa)). K237 is covalently cross-linked (Glycyl lysine isopeptide (Lys-Gly) (interchain with G-Cter in SUMO)). Residues 244–382 (SDLYHATTGP…SRPRPDDLEI (139 aa)) form an interaction with NOV region. Position 247 is a phosphotyrosine (Y247). S255, S257, and S262 each carry phosphoserine. Positions 264-382 (TYAYFNGCSS…SRPRPDDLEI (119 aa)) are interaction with UBQLN4. Position 271 is an S-nitrosocysteine (C271). T275 carries the phosphothreonine modification. 2 positions are modified to phosphoserine: S306 and S314. Positions 317 to 332 (QNRMGQAGSTISNSHA) are enriched in polar residues. The interval 317 to 382 (QNRMGQAGST…SRPRPDDLEI (66 aa)) is disordered. Position 325 is a phosphoserine; by CK1 (S325). Phosphothreonine is present on T326. 2 positions are modified to phosphoserine; by CK1: S328 and S330. Residues S344 and S365 each carry the phosphoserine modification. Over residues 362-374 (RPSSRASSRASSR) the composition is skewed to low complexity. S368 is subject to Phosphoserine; by PKC/PRKCG and PKC/PRKCD. Phosphoserine occurs at positions 369 and 373.

Belongs to the connexin family. Alpha-type (group II) subfamily. In terms of assembly, a connexon is composed of a hexamer of connexins. Interacts with SGSM3. Interacts with RIC1/CIP150. Interacts with CNST and CSNK1D. Interacts (via C-terminus) with TJP1. Interacts (via C-terminus) with SRC (via SH3 domain). Interacts (not ubiquitinated) with UBQLN4 (via UBA domain). Interacts with NOV. Interacts with TMEM65. Interacts with ANK3/ANKG and PKP2. Post-translationally, phosphorylation at Ser-325, Ser-328 and Ser-330 by CK1 modulates gap junction assembly. Phosphorylated at Ser-368 by PRKCG; phosphorylation induces disassembly of gap junction plaques and inhibition of gap junction activity. Phosphorylation at Ser-368 by PRKCD triggers its internalization into small vesicles leading to proteasome-mediated degradation. Sumoylated with SUMO1, SUMO2 and SUMO3, which may regulate the level of functional Cx43 gap junctions at the plasma membrane. May be desumoylated by SENP1 or SENP2. In terms of processing, S-nitrosylation at Cys-271 is enriched at the muscle endothelial gap junction in arteries, it augments channel permeability and may regulate of smooth muscle cell to endothelial cell communication. Post-translationally, acetylated in the developing cortex; leading to delocalization from the cell membrane.

It localises to the cell membrane. It is found in the cell junction. The protein localises to the gap junction. The protein resides in the endoplasmic reticulum. Gap junction protein that acts as a regulator of bladder capacity. A gap junction consists of a cluster of closely packed pairs of transmembrane channels, the connexons, through which materials of low MW diffuse from one cell to a neighboring cell. May play a critical role in the physiology of hearing by participating in the recycling of potassium to the cochlear endolymph. Negative regulator of bladder functional capacity: acts by enhancing intercellular electrical and chemical transmission, thus sensitizing bladder muscles to cholinergic neural stimuli and causing them to contract. May play a role in cell growth inhibition through the regulation of NOV expression and localization. Plays an essential role in gap junction communication in the ventricles. This Erinaceus europaeus (Western European hedgehog) protein is Gap junction alpha-1 protein (GJA1).